A 381-amino-acid polypeptide reads, in one-letter code: Phospholipid scramblase family protein C343.06c (381 aa).

The tract at residues 336–369 (QEILKNDQETTPSTNDSSSETKSPFLSDADLDQQ) is disordered. Residues 344-359 (ETTPSTNDSSSETKSP) show a composition bias toward polar residues.

Belongs to the phospholipid scramblase family.

It localises to the mitochondrion. This Schizosaccharomyces pombe (strain 972 / ATCC 24843) (Fission yeast) protein is Phospholipid scramblase family protein C343.06c.